A 211-amino-acid chain; its full sequence is Probable endopeptidase cgR_2070 (211 aa).

Residues 1 to 35 form the signal peptide; it reads MGKHRRNNSNATRKAVAASAVALGATAAIASPAQA. In terms of domain architecture, NlpC/P60 spans 97-211; that stretch reads ASTGQAIVDA…YMPFHSAVRF (115 aa). Residue Cys-127 is the Nucleophile of the active site. The active-site Proton acceptor is His-175. His-187 is an active-site residue.

The protein belongs to the peptidase C40 family.

It is found in the secreted. The chain is Probable endopeptidase cgR_2070 from Corynebacterium glutamicum (strain R).